The sequence spans 616 residues: MTEGSQIFLLPISTSDSTKEPLSPVASKAQDPSLLSNRLMIEKQQEEAEWESINGLLMTHGFKPLCLVKGADLRDFIVFDKQSSQKMRQILKTLMEETTRQQSMIRELIETNQQLKSELQLEQNRAAHQEQRANDLQQIMDSVKSKIGELEDESLNRVCQQQNRIKDLQKEYKMLQMKCQQYKKNRMEQEGTIASLQKEIHRLAKEEEERILTQNRVFAHLCRRVPHSVLDKQLLCLIDYYECKLRKLHIQRQFEEDSQSEEKDFTNLGASPNYKGVLMSLQKQLKESKSRIDVLVGEKLSLQKDLENRPTEHELRLYKQQVKKLEKTLKKNIKLQDLIGQKKSDDTEKKDEPSKDSHQQALIEQSYFQVLCSINSIVHNPRAPVIIYKQSKGRAPNGNKDIGQDCGFEHLVPIIEMWVDELTSLKDLYKSLKILSAELVPWHSLKKLDEKEGVKVGDLLFMVDTMLEEVENQKETSSTPNSQTLQAIVSHFQKLFDVQSLNGVFPRMNEVYTRLGEMNNAVRNLQELLELDSSSSLCVVVSTVGKLCEIINKDVSEQVKQVLGPEDLQSIIKKLEEHEEFFPAFQAFANDLLEILEIDDLDAIVPAVKKLKILSY.

Coiled-coil stretches lie at residues 96–210 and 273–335; these read EETT…EEER and NYKG…NIKL. The TPR repeat unit spans residues 502-535; that stretch reads NGVFPRMNEVYTRLGEMNNAVRNLQELLELDSSS.

Directly interacts with tubulin-gamma; this interaction determines centrosomal localization.

It localises to the cytoplasm. Its subcellular location is the cytoskeleton. The protein localises to the microtubule organizing center. It is found in the centrosome. Plays a role in the organization of both preexisting and nascent microtubules in interphase cells. During mitosis, required for the organization and orientation of the mitotic spindle. This chain is Centrosomal protein of 70 kDa (Cep70), found in Mus musculus (Mouse).